Consider the following 131-residue polypeptide: Small ribosomal subunit protein uS8 (131 aa).

This sequence belongs to the universal ribosomal protein uS8 family. Part of the 30S ribosomal subunit. Contacts proteins S5 and S12.

One of the primary rRNA binding proteins, it binds directly to 16S rRNA central domain where it helps coordinate assembly of the platform of the 30S subunit. The protein is Small ribosomal subunit protein uS8 of Wolinella succinogenes (strain ATCC 29543 / DSM 1740 / CCUG 13145 / JCM 31913 / LMG 7466 / NCTC 11488 / FDC 602W) (Vibrio succinogenes).